Reading from the N-terminus, the 347-residue chain is Cannabinoid receptor 2 (347 aa).

The Extracellular portion of the chain corresponds to 1–33 (MEGCRETEVTNGSNGGLEFNPMKEYMILSSGQQ). N-linked (GlcNAc...) asparagine glycosylation occurs at Asn11. Residues 34–59 (IAVAVLCTLMGLLSALENMAVLYIIL) form a helical membrane-spanning segment. Over 60-71 (SSRRLRRKPSYL) the chain is Cytoplasmic. Residues 72-92 (FISSLAGADFLASVIFACNFV) form a helical membrane-spanning segment. Residues 93–104 (IFHVFHGVDSNA) lie on the Extracellular side of the membrane. Residues 105 to 129 (IFLLKIGSVTMTFTASVGSLLLTAV) traverse the membrane as a helical segment. The Cytoplasmic segment spans residues 130 to 149 (DRYLCLCYPPTYKALVTRGR). Residues 150–172 (ALVALCVMWVLSALISYLPLMGW) traverse the membrane as a helical segment. The Extracellular segment spans residues 173 to 188 (TCCPSPCSELFPLIPN). The helical transmembrane segment at 189-214 (DYLLGWLLFIAILFSGIIYTYGYVLW) threads the bilayer. At 215–246 (KAHRHVATLAEHQDRQVPGIARMRLDVRLAKT) the chain is on the cytoplasmic side. A helical membrane pass occupies residues 247 to 267 (LGLVLAVLLICWFPALALMGH). Residues 268 to 279 (SLVTTLSDQVKE) are Extracellular-facing. Residues 280–301 (AFAFCSMLCLVNSMVNPIIYAL) form a helical membrane-spanning segment. Over 302-347 (RSGEIRSAAQHCLIGWKKYLQGLGPEGKEEGPRSSVTETEADVKTT) the chain is Cytoplasmic. A disordered region spans residues 326–347 (PEGKEEGPRSSVTETEADVKTT). A phosphoserine mark is found at Ser335 and Ser336. Thr338 carries the phosphothreonine modification.

It belongs to the G-protein coupled receptor 1 family. In terms of tissue distribution, expressed by cells of hematopoietic origin. Expressed in skin in suprabasal layers and hair follicles, in brain by neurons and glial cells and by osteoblasts, osteocytes, osteoclasts (at protein level).

The protein resides in the cell membrane. It is found in the cell projection. Its subcellular location is the dendrite. The protein localises to the perikaryon. Heterotrimeric G protein-coupled receptor for endocannabinoid 2-arachidonoylglycerol mediating inhibition of adenylate cyclase. May function in inflammatory response, nociceptive transmission and bone homeostasis. In Mus musculus (Mouse), this protein is Cannabinoid receptor 2 (Cnr2).